The primary structure comprises 515 residues: Maturase K (515 aa).

This sequence belongs to the intron maturase 2 family. MatK subfamily.

It is found in the plastid. Its subcellular location is the chloroplast. Its function is as follows. Usually encoded in the trnK tRNA gene intron. Probably assists in splicing its own and other chloroplast group II introns. The protein is Maturase K of Ceratophyllum demersum (Rigid hornwort).